A 296-amino-acid chain; its full sequence is Acetyl-coenzyme A carboxylase carboxyl transferase subunit beta (296 aa).

Residues 25 to 294 (LWIKDPSTGE…NSDAPAPPEA (270 aa)) enclose the CoA carboxyltransferase N-terminal domain.

It belongs to the AccD/PCCB family. As to quaternary structure, acetyl-CoA carboxylase is a heterohexamer composed of biotin carboxyl carrier protein (AccB), biotin carboxylase (AccC) and two subunits each of ACCase subunit alpha (AccA) and ACCase subunit beta (AccD).

It is found in the cytoplasm. It catalyses the reaction N(6)-carboxybiotinyl-L-lysyl-[protein] + acetyl-CoA = N(6)-biotinyl-L-lysyl-[protein] + malonyl-CoA. It participates in lipid metabolism; malonyl-CoA biosynthesis; malonyl-CoA from acetyl-CoA: step 1/1. In terms of biological role, component of the acetyl coenzyme A carboxylase (ACC) complex. Biotin carboxylase (BC) catalyzes the carboxylation of biotin on its carrier protein (BCCP) and then the CO(2) group is transferred by the transcarboxylase to acetyl-CoA to form malonyl-CoA. This chain is Acetyl-coenzyme A carboxylase carboxyl transferase subunit beta, found in Brucella ovis (strain ATCC 25840 / 63/290 / NCTC 10512).